A 170-amino-acid chain; its full sequence is Fimbrial protein (170 aa).

Residues 1–7 constitute a propeptide that is removed on maturation; that stretch reads MNTLQKG. Position 8 is an N-methylphenylalanine (Phe8). The helical transmembrane segment at 8–28 threads the bilayer; it reads FTLIELMIVIAIVGILAAVAL. Ser70 is a glycosylation site (O-linked (Gal...) serine). Position 100 is an O-(sn-1-glycerophosphoryl)serine (Ser100). A disulfide bridge connects residues Cys127 and Cys163.

The protein belongs to the N-Me-Phe pilin family. The pili are polar flexible filaments of about 5.4 nanometers diameter and 2.5 micrometers average length; they consist of only a single polypeptide chain arranged in a helical configuration of five subunits per turn in the assembled pilus. In terms of processing, O-linked glycan consists of GlcNAc-Gal disaccharide.

The protein resides in the fimbrium. Its subcellular location is the membrane. In terms of biological role, major component of the type IV pilus (T4P) that plays a role in cellular adherence, microcolony formation as well as twitching motility. The chain is Fimbrial protein (pilE) from Neisseria meningitidis serogroup A / serotype 4A (strain DSM 15465 / Z2491).